Here is a 522-residue protein sequence, read N- to C-terminus: Nitrogen fixation protein VnfA (522 aa).

Residues 22-183 (LLYEMSQIAT…AQAVELYLVE (162 aa)) are a domain. Residues 35-177 (DLSSIISILL…ILATTTAQAV (143 aa)) form the GAF domain. In terms of domain architecture, Sigma-54 factor interaction spans 210–439 (IIGNSKPMLE…LENVIERAML (230 aa)). ATP is bound by residues 238–245 (GESGVGKE) and 301–310 (AAGGTIFLDE). A DNA-binding region (H-T-H motif) is located at residues 493-512 (MTEAATHLGLTARVLGLRMG).

Its function is as follows. Required for the expression of the V-dependent nitrogen fixation system in Azotobacter vinelandii. It is required for the regulation of nitrogenase 2 transcription. Interacts with sigma-54. The polypeptide is Nitrogen fixation protein VnfA (vnfA) (Azotobacter vinelandii).